The primary structure comprises 185 residues: Large ribosomal subunit protein uL6 (185 aa).

Belongs to the universal ribosomal protein uL6 family. As to quaternary structure, part of the 50S ribosomal subunit.

This protein binds to the 23S rRNA, and is important in its secondary structure. It is located near the subunit interface in the base of the L7/L12 stalk, and near the tRNA binding site of the peptidyltransferase center. This is Large ribosomal subunit protein uL6 from Staphylothermus marinus (strain ATCC 43588 / DSM 3639 / JCM 9404 / F1).